We begin with the raw amino-acid sequence, 339 residues long: UDP-3-O-acylglucosamine N-acyltransferase (339 aa).

The Proton acceptor role is filled by histidine 248.

It belongs to the transferase hexapeptide repeat family. LpxD subfamily. In terms of assembly, homotrimer.

The enzyme catalyses a UDP-3-O-[(3R)-3-hydroxyacyl]-alpha-D-glucosamine + a (3R)-hydroxyacyl-[ACP] = a UDP-2-N,3-O-bis[(3R)-3-hydroxyacyl]-alpha-D-glucosamine + holo-[ACP] + H(+). It participates in bacterial outer membrane biogenesis; LPS lipid A biosynthesis. Functionally, catalyzes the N-acylation of UDP-3-O-acylglucosamine using 3-hydroxyacyl-ACP as the acyl donor. Is involved in the biosynthesis of lipid A, a phosphorylated glycolipid that anchors the lipopolysaccharide to the outer membrane of the cell. The chain is UDP-3-O-acylglucosamine N-acyltransferase from Caulobacter vibrioides (strain NA1000 / CB15N) (Caulobacter crescentus).